The sequence spans 384 residues: Shufflon-specific DNA recombinase (384 aa).

Positions Met-9–Arg-96 constitute a Core-binding (CB) domain. Residues Gly-118–Asp-284 form the Tyr recombinase domain. Residues Arg-155, Lys-180, His-235, Arg-238, and His-262 contribute to the active site. The active-site O-(3'-phospho-DNA)-tyrosine intermediate is the Tyr-271.

The protein belongs to the 'phage' integrase family.

Shufflon-specific DNA recombinase. The polypeptide is Shufflon-specific DNA recombinase (rci) (Escherichia coli).